A 156-amino-acid chain; its full sequence is MPRRRVVGTRKILPDPKFGSEVLAKFVNVVMVDGKKSIAEKIVYGALEAAASKSGKVALDLFEVALENIRPSVEVKSRRVGGSTYQVPVEVRPSRRNALAMRWLVEASRKRGEKSMALRLAGELVDASDNKGSAVKKREDVHRMADANKAFAHYRW.

The protein belongs to the universal ribosomal protein uS7 family. As to quaternary structure, part of the 30S ribosomal subunit. Contacts proteins S9 and S11.

One of the primary rRNA binding proteins, it binds directly to 16S rRNA where it nucleates assembly of the head domain of the 30S subunit. Is located at the subunit interface close to the decoding center, probably blocks exit of the E-site tRNA. This Psychromonas ingrahamii (strain DSM 17664 / CCUG 51855 / 37) protein is Small ribosomal subunit protein uS7.